The sequence spans 45 residues: Large ribosomal subunit protein bL34c (45 aa).

Residues 1-21 (MIQRTLTGTNRKKTKRSGFRS) are disordered. The span at 10–19 (NRKKTKRSGF) shows a compositional bias: basic residues.

The protein belongs to the bacterial ribosomal protein bL34 family.

It localises to the plastid. The protein localises to the chloroplast. This Cyanidium caldarium (Red alga) protein is Large ribosomal subunit protein bL34c (rpl34).